Here is a 267-residue protein sequence, read N- to C-terminus: Hydroxyethylthiazole kinase (267 aa).

M48 serves as a coordination point for substrate. ATP-binding residues include R124 and S170. G197 lines the substrate pocket.

The protein belongs to the Thz kinase family. It depends on Mg(2+) as a cofactor.

It catalyses the reaction 5-(2-hydroxyethyl)-4-methylthiazole + ATP = 4-methyl-5-(2-phosphooxyethyl)-thiazole + ADP + H(+). It participates in cofactor biosynthesis; thiamine diphosphate biosynthesis; 4-methyl-5-(2-phosphoethyl)-thiazole from 5-(2-hydroxyethyl)-4-methylthiazole: step 1/1. In terms of biological role, catalyzes the phosphorylation of the hydroxyl group of 4-methyl-5-beta-hydroxyethylthiazole (THZ). In Aliivibrio fischeri (strain ATCC 700601 / ES114) (Vibrio fischeri), this protein is Hydroxyethylthiazole kinase.